The following is a 409-amino-acid chain: MKIERPRGTRDFLPDEMERRREIEKRMRKIAESFGYREVATPTFEYLELFTRKSGEGIIEEMYVFKDKSGRDLALRPELTAPVMRMFVNECSVMPKPLRFYYFANCFRYERPQKGRYREFWQFGVELIGSESYLADAEVIILADKILKDVGVNFSLEIGHVGIMRHLLKPIGEDRASKVMRLIDKGDREGLESYLAEIRVNEDLRDKIFSLLELKGDESVIEEAKEIIDYDFGHLESLSALLRDVGVDFTLNLGIARGLDYYTGVVFECYAEGLGAQKQVCGGGSYELSSLFGGPVTPSTGFAIGFDRVCEACSVEAGEKSVVAVVSFKGLESQAFRVASMLRERGFTAVVDVMGRNLKKQMSFASEMGVKYAVILGPDEVKSGRVAIKNLETQEQVVVAEEELFSILQ.

Belongs to the class-II aminoacyl-tRNA synthetase family.

It localises to the cytoplasm. The catalysed reaction is tRNA(His) + L-histidine + ATP = L-histidyl-tRNA(His) + AMP + diphosphate + H(+). This is Histidine--tRNA ligase (hisS) from Archaeoglobus fulgidus (strain ATCC 49558 / DSM 4304 / JCM 9628 / NBRC 100126 / VC-16).